A 350-amino-acid chain; its full sequence is Ubiquitin carboxyl-terminal hydrolase 11 (350 aa).

Positions 49 to 344 (KGLYNVSGND…SACLLFYEME (296 aa)) constitute a USP domain. The active-site Nucleophile is Cys-59. His-302 serves as the catalytic Proton acceptor.

The protein belongs to the peptidase C19 family.

It carries out the reaction Thiol-dependent hydrolysis of ester, thioester, amide, peptide and isopeptide bonds formed by the C-terminal Gly of ubiquitin (a 76-residue protein attached to proteins as an intracellular targeting signal).. In Schizosaccharomyces pombe (strain 972 / ATCC 24843) (Fission yeast), this protein is Ubiquitin carboxyl-terminal hydrolase 11 (ubp11).